Consider the following 350-residue polypeptide: MSQSTLLFQIEPASRAQDQFIQQKIDLKTKPPGALGLLEPLALQIARIQGPKQLEIVNPTMLVFAGDHGIAAEGVSIAPSEVTRQMVQNFAHGGAAINVFCRQLGFNLEVIDCGILTPVEGVEGIIDQRLGAGTGAIHLEPAMSLACVDKGFAMAQALIERHHQAGCNLVAFGEMGIGNTSSAAAIMAAIMQLDVADCVGRGTGISSETLERKQMLIELALLLHQSAMTGPKQVLACLGGFEIVQMTGAMLAAAERKMLVVVDGFIATAAALVAVTINAHVRDYLIFAHRSEEQGHQRMLEHLKAKPLLSLGLRLGEGTGAALALPLIQAAVNFYNQMASFSDAGIEAVV.

The active-site Proton acceptor is Glu-317.

It belongs to the CobT family.

The enzyme catalyses 5,6-dimethylbenzimidazole + nicotinate beta-D-ribonucleotide = alpha-ribazole 5'-phosphate + nicotinate + H(+). It participates in nucleoside biosynthesis; alpha-ribazole biosynthesis; alpha-ribazole from 5,6-dimethylbenzimidazole: step 1/2. In terms of biological role, catalyzes the synthesis of alpha-ribazole-5'-phosphate from nicotinate mononucleotide (NAMN) and 5,6-dimethylbenzimidazole (DMB). The protein is Nicotinate-nucleotide--dimethylbenzimidazole phosphoribosyltransferase of Shewanella sp. (strain MR-4).